We begin with the raw amino-acid sequence, 700 residues long: Receptor-type tyrosine-protein phosphatase epsilon (700 aa).

The signal sequence occupies residues 1 to 19 (MEPLCPLLLVGFSLPLARA). At 20–46 (LRGNETTADSNETTTTSGPPDPGASQP) the chain is on the extracellular side. Asn23 and Asn30 each carry an N-linked (GlcNAc...) asparagine glycan. A helical transmembrane segment spans residues 47 to 69 (LLAWLLLPLLLLLLVLLLAAYFF). Residues 70-700 (RFRKQRKAVV…DIFSDYANFK (631 aa)) are Cytoplasmic-facing. 2 consecutive Tyrosine-protein phosphatase domains span residues 135–394 (FREE…LLEY) and 426–689 (LEEE…VQDF). Residues Asp303, 335 to 341 (CSAGVGR), and Gln379 each bind substrate. Catalysis depends on Cys335, which acts as the Phosphocysteine intermediate. Cys630 acts as the Phosphocysteine intermediate in catalysis. Tyr696 is subject to Phosphotyrosine.

This sequence belongs to the protein-tyrosine phosphatase family. Receptor class 4 subfamily. Monomer. Isoform 2: Homodimer. Can form oligomers. Dimerization is increased by oxidative stress and decreased by EGFR. Isoform 2 interacts with GRB2. Post-translationally, a catalytically active cytoplasmic form (p65) is produced by proteolytic cleavage of either isoform 1, isoform 2 or isoform 3. Isoform 1 and isoform 2 are phosphorylated on tyrosine residues by tyrosine kinase Neu. In terms of processing, isoform 1 is glycosylated. As to expression, expressed in giant cell tumor (osteoclastoma rich in multinucleated osteoclastic cells).

It localises to the cell membrane. The protein resides in the cytoplasm. It carries out the reaction O-phospho-L-tyrosyl-[protein] + H2O = L-tyrosyl-[protein] + phosphate. Functionally, isoform 1 plays a critical role in signaling transduction pathways and phosphoprotein network topology in red blood cells. May play a role in osteoclast formation and function. In terms of biological role, isoform 2 acts as a negative regulator of insulin receptor (IR) signaling in skeletal muscle. Regulates insulin-induced tyrosine phosphorylation of insulin receptor (IR) and insulin receptor substrate 1 (IRS-1), phosphorylation of protein kinase B and glycogen synthase kinase-3 and insulin induced stimulation of glucose uptake. Isoform 1 and isoform 2 act as a negative regulator of FceRI-mediated signal transduction leading to cytokine production and degranulation, most likely by acting at the level of SYK to affect downstream events such as phosphorylation of SLP76 and LAT and mobilization of Ca(2+). This chain is Receptor-type tyrosine-protein phosphatase epsilon (PTPRE), found in Homo sapiens (Human).